The sequence spans 88 residues: Apolipoprotein C-I (88 aa).

Residues 1–26 (MRLFLSLPVLVVVLAMVLEGPAPAQA) form the signal peptide.

The protein belongs to the apolipoprotein C1 family.

It is found in the secreted. Functionally, inhibitor of lipoprotein binding to the low density lipoprotein (LDL) receptor, LDL receptor-related protein, and very low density lipoprotein (VLDL) receptor. Associates with high density lipoproteins (HDL) and the triacylglycerol-rich lipoproteins in the plasma and makes up about 10% of the protein of the VLDL and 2% of that of HDL. Appears to interfere directly with fatty acid uptake and is also the major plasma inhibitor of cholesteryl ester transfer protein (CETP). Binds free fatty acids and reduces their intracellular esterification. Modulates the interaction of APOE with beta-migrating VLDL and inhibits binding of beta-VLDL to the LDL receptor-related protein. In Arctocephalus gazella (Antarctic fur seal), this protein is Apolipoprotein C-I (APOC1).